Reading from the N-terminus, the 484-residue chain is Glutamyl-tRNA(Gln) amidotransferase subunit A (484 aa).

Catalysis depends on charge relay system residues lysine 76 and serine 151. Serine 175 serves as the catalytic Acyl-ester intermediate.

It belongs to the amidase family. GatA subfamily. Heterotrimer of A, B and C subunits.

The catalysed reaction is L-glutamyl-tRNA(Gln) + L-glutamine + ATP + H2O = L-glutaminyl-tRNA(Gln) + L-glutamate + ADP + phosphate + H(+). Its function is as follows. Allows the formation of correctly charged Gln-tRNA(Gln) through the transamidation of misacylated Glu-tRNA(Gln) in organisms which lack glutaminyl-tRNA synthetase. The reaction takes place in the presence of glutamine and ATP through an activated gamma-phospho-Glu-tRNA(Gln). The sequence is that of Glutamyl-tRNA(Gln) amidotransferase subunit A from Hahella chejuensis (strain KCTC 2396).